The following is a 129-amino-acid chain: NADH-quinone oxidoreductase subunit A (129 aa).

Helical transmembrane passes span 14 to 34 (LAIH…VAAL), 67 to 87 (FLIA…FAWA), and 95 to 115 (WFGL…LVYL).

This sequence belongs to the complex I subunit 3 family. In terms of assembly, NDH-1 is composed of 14 different subunits. Subunits NuoA, H, J, K, L, M, N constitute the membrane sector of the complex.

The protein localises to the cell inner membrane. The catalysed reaction is a quinone + NADH + 5 H(+)(in) = a quinol + NAD(+) + 4 H(+)(out). In terms of biological role, NDH-1 shuttles electrons from NADH, via FMN and iron-sulfur (Fe-S) centers, to quinones in the respiratory chain. The immediate electron acceptor for the enzyme in this species is believed to be ubiquinone. Couples the redox reaction to proton translocation (for every two electrons transferred, four hydrogen ions are translocated across the cytoplasmic membrane), and thus conserves the redox energy in a proton gradient. In Rhodopseudomonas palustris (strain HaA2), this protein is NADH-quinone oxidoreductase subunit A.